The primary structure comprises 280 residues: MKKEKLRIENISFQYPGAATYALKDVSFSLYEGEWVSIIGQNGSGKSTLAKLLNGLFLPEAGTITVNDTMVLSEETVWDVRKQIGMVFQNPDNQFVGTTVQDDVVFGLENIGMPREQMIERLEQALQLVRMEDFLNDEPHSLSGGQKQRVAIAGVLALQPSILILDEATSMLDPQGRREVVETVRQLVTQKGITVLSITHDLEEAAQSDRVIILNKGEILEEGTPEKIFKSSHMLQEIGLDVPFSVKIAELLKRNEILLQNTHLTMESLVNELWRLHSKK.

The 236-residue stretch at 6-241 (LRIENISFQY…SHMLQEIGLD (236 aa)) folds into the ABC transporter domain. An ATP-binding site is contributed by 40 to 47 (GQNGSGKS).

Belongs to the ABC transporter superfamily. Energy-coupling factor EcfA family. As to quaternary structure, forms a stable energy-coupling factor (ECF) transporter complex composed of 2 membrane-embedded substrate-binding proteins (S component), 2 ATP-binding proteins (A component) and 2 transmembrane proteins (T component).

Its subcellular location is the cell membrane. In terms of biological role, ATP-binding (A) component of a common energy-coupling factor (ECF) ABC-transporter complex. Unlike classic ABC transporters this ECF transporter provides the energy necessary to transport a number of different substrates. The chain is Energy-coupling factor transporter ATP-binding protein EcfA1 from Bacillus cereus (strain ATCC 14579 / DSM 31 / CCUG 7414 / JCM 2152 / NBRC 15305 / NCIMB 9373 / NCTC 2599 / NRRL B-3711).